Consider the following 203-residue polypeptide: Ribonuclease HII (203 aa).

The RNase H type-2 domain maps to 15 to 201; sequence LLVAGLDEAG…VAQAPLRFPE (187 aa). Residues Asp21, Glu22, and Asp111 each coordinate a divalent metal cation.

The protein belongs to the RNase HII family. Mn(2+) is required as a cofactor. Mg(2+) serves as cofactor.

Its subcellular location is the cytoplasm. It carries out the reaction Endonucleolytic cleavage to 5'-phosphomonoester.. In terms of biological role, endonuclease that specifically degrades the RNA of RNA-DNA hybrids. The sequence is that of Ribonuclease HII from Thermus thermophilus (strain ATCC BAA-163 / DSM 7039 / HB27).